Here is a 370-residue protein sequence, read N- to C-terminus: Protein FAM110B (370 aa).

2 disordered regions span residues S127–A151 and K237–L256. 2 positions are modified to phosphoserine: S238 and S301. The segment at D317–R337 is disordered. The span at S326–N335 shows a compositional bias: basic and acidic residues.

Belongs to the FAM110 family.

The protein resides in the cytoplasm. The protein localises to the cytoskeleton. It localises to the microtubule organizing center. Its subcellular location is the centrosome. This Pongo abelii (Sumatran orangutan) protein is Protein FAM110B (FAM110B).